A 609-amino-acid polypeptide reads, in one-letter code: WD repeat-containing protein 1 (609 aa).

13 WD repeats span residues 6 to 47, 50 to 89, 95 to 137, 140 to 178, 182 to 220, 226 to 265, 272 to 308, 313 to 353, 360 to 410, 434 to 476, 482 to 520, 525 to 563, and 568 to 606; these read EIKK…IRNI, PAIA…IWDT, LLKY…LWDS, SVGE…FFEG, KFKF…IYDG, VCAL…IWDV, STFN…YLDK, KPLR…YWDS, GFSG…KMDV, MKDK…LYSI, KSDD…VFSV, VEHN…VWTV, and TRIK…EWSI.

This sequence belongs to the WD repeat AIP1 family.

Its subcellular location is the cytoplasm. It is found in the cytoskeleton. Its function is as follows. Induces disassembly of actin filaments in conjunction with ADF/cofilin family proteins. Enhances cofilin-mediated actin severing. This Gallus gallus (Chicken) protein is WD repeat-containing protein 1 (WDR1).